A 230-amino-acid polypeptide reads, in one-letter code: uncharacterized protein (230 aa).

Residues 93 to 115 traverse the membrane as a helical segment; that stretch reads VFLYYFLIVYTSGNVDLISRFLF.

The protein belongs to the DUP/COS family.

It is found in the membrane. This is an uncharacterized protein from Saccharomyces cerevisiae (strain ATCC 204508 / S288c) (Baker's yeast).